The primary structure comprises 229 residues: Putative N-acetylmannosamine-6-phosphate 2-epimerase (229 aa).

It belongs to the NanE family.

It catalyses the reaction an N-acyl-D-glucosamine 6-phosphate = an N-acyl-D-mannosamine 6-phosphate. The protein operates within amino-sugar metabolism; N-acetylneuraminate degradation; D-fructose 6-phosphate from N-acetylneuraminate: step 3/5. Converts N-acetylmannosamine-6-phosphate (ManNAc-6-P) to N-acetylglucosamine-6-phosphate (GlcNAc-6-P). This is Putative N-acetylmannosamine-6-phosphate 2-epimerase from Escherichia coli O127:H6 (strain E2348/69 / EPEC).